We begin with the raw amino-acid sequence, 462 residues long: Cysteine--tRNA ligase (462 aa).

Cysteine 30 is a Zn(2+) binding site. The short motif at 32-42 (PTVYDRAHLGN) is the 'HIGH' region element. Positions 221, 246, and 250 each coordinate Zn(2+). The short motif at 279 to 283 (KMSKS) is the 'KMSKS' region element. ATP is bound at residue lysine 282.

The protein belongs to the class-I aminoacyl-tRNA synthetase family. In terms of assembly, monomer. Requires Zn(2+) as cofactor.

Its subcellular location is the cytoplasm. It catalyses the reaction tRNA(Cys) + L-cysteine + ATP = L-cysteinyl-tRNA(Cys) + AMP + diphosphate. This chain is Cysteine--tRNA ligase, found in Paracoccus denitrificans (strain Pd 1222).